A 901-amino-acid chain; its full sequence is Putative serine/threonine-protein kinase YPL150W (901 aa).

Positions 41–287 (YKILKQIGEG…LSQVLRHPFL (247 aa)) constitute a Protein kinase domain. Residues 47-55 (IGEGSFGKV) and K70 contribute to the ATP site. D157 acts as the Proton acceptor in catalysis. S456 is modified (phosphoserine). A disordered region spans residues 500–530 (APSSGSFLKKNSGSIQKSRTDTVANPSRTES). Phosphoserine is present on S533. Over residues 588 to 599 (SSISSEISQTST) the composition is skewed to low complexity. Disordered stretches follow at residues 588–629 (SSIS…NRPL) and 745–770 (TQRP…SSKR). Residues 600–613 (GNYDSESAENSRSI) show a composition bias toward polar residues. The segment covering 759 to 770 (RHGKNARRSSKR) has biased composition (basic residues).

This sequence belongs to the protein kinase superfamily. Ser/Thr protein kinase family.

It catalyses the reaction L-seryl-[protein] + ATP = O-phospho-L-seryl-[protein] + ADP + H(+). It carries out the reaction L-threonyl-[protein] + ATP = O-phospho-L-threonyl-[protein] + ADP + H(+). In terms of biological role, putative serine/threonine-protein kinase. In Saccharomyces cerevisiae (strain ATCC 204508 / S288c) (Baker's yeast), this protein is Putative serine/threonine-protein kinase YPL150W.